A 303-amino-acid polypeptide reads, in one-letter code: 4-hydroxy-3-methylbut-2-enyl diphosphate reductase (303 aa).

Cys-12 is a binding site for [4Fe-4S] cluster. The (2E)-4-hydroxy-3-methylbut-2-enyl diphosphate site is built by His-42 and His-75. Residues His-42 and His-75 each coordinate dimethylallyl diphosphate. The isopentenyl diphosphate site is built by His-42 and His-75. [4Fe-4S] cluster is bound at residue Cys-97. His-125 contributes to the (2E)-4-hydroxy-3-methylbut-2-enyl diphosphate binding site. Residue His-125 participates in dimethylallyl diphosphate binding. His-125 serves as a coordination point for isopentenyl diphosphate. The Proton donor role is filled by Glu-127. Ser-164 is a binding site for (2E)-4-hydroxy-3-methylbut-2-enyl diphosphate. Position 192 (Cys-192) interacts with [4Fe-4S] cluster. Residues Ser-220, Ser-221, Asn-222, and Ser-264 each contribute to the (2E)-4-hydroxy-3-methylbut-2-enyl diphosphate site. 4 residues coordinate dimethylallyl diphosphate: Ser-220, Ser-221, Asn-222, and Ser-264. Residues Ser-220, Ser-221, Asn-222, and Ser-264 each contribute to the isopentenyl diphosphate site.

It belongs to the IspH family. It depends on [4Fe-4S] cluster as a cofactor.

The catalysed reaction is isopentenyl diphosphate + 2 oxidized [2Fe-2S]-[ferredoxin] + H2O = (2E)-4-hydroxy-3-methylbut-2-enyl diphosphate + 2 reduced [2Fe-2S]-[ferredoxin] + 2 H(+). The enzyme catalyses dimethylallyl diphosphate + 2 oxidized [2Fe-2S]-[ferredoxin] + H2O = (2E)-4-hydroxy-3-methylbut-2-enyl diphosphate + 2 reduced [2Fe-2S]-[ferredoxin] + 2 H(+). It participates in isoprenoid biosynthesis; dimethylallyl diphosphate biosynthesis; dimethylallyl diphosphate from (2E)-4-hydroxy-3-methylbutenyl diphosphate: step 1/1. The protein operates within isoprenoid biosynthesis; isopentenyl diphosphate biosynthesis via DXP pathway; isopentenyl diphosphate from 1-deoxy-D-xylulose 5-phosphate: step 6/6. Its function is as follows. Catalyzes the conversion of 1-hydroxy-2-methyl-2-(E)-butenyl 4-diphosphate (HMBPP) into a mixture of isopentenyl diphosphate (IPP) and dimethylallyl diphosphate (DMAPP). Acts in the terminal step of the DOXP/MEP pathway for isoprenoid precursor biosynthesis. The sequence is that of 4-hydroxy-3-methylbut-2-enyl diphosphate reductase from Neorickettsia sennetsu (strain ATCC VR-367 / Miyayama) (Ehrlichia sennetsu).